The sequence spans 240 residues: Tetrahydromethanopterin S-methyltransferase subunit A (240 aa).

The Cytoplasmic portion of the chain corresponds to 1–218 (MADKREPAPG…KFHSGVHAGK (218 aa)). A 5-hydroxybenzimidazolylcob(I)amide-binding site is contributed by histidine 85. The chain crosses the membrane as a helical span at residues 219-239 (VEGAMIGLTITISLLGLLLLG). Arginine 240 is a topological domain (extracellular).

The protein belongs to the MtrA family. As to quaternary structure, the complex is composed of 8 subunits; MtrA, MtrB, MtrC, MtrD, MtrE, MtrF, MtrG and MtrH. 5-hydroxybenzimidazolylcob(I)amide is required as a cofactor.

The protein localises to the cell membrane. The catalysed reaction is 5-methyl-5,6,7,8-tetrahydromethanopterin + coenzyme M + 2 Na(+)(in) = 5,6,7,8-tetrahydromethanopterin + methyl-coenzyme M + 2 Na(+)(out). The protein operates within one-carbon metabolism; methanogenesis from CO(2); methyl-coenzyme M from 5,10-methylene-5,6,7,8-tetrahydromethanopterin: step 2/2. Its function is as follows. Part of a complex that catalyzes the formation of methyl-coenzyme M and tetrahydromethanopterin from coenzyme M and methyl-tetrahydromethanopterin. This is an energy-conserving, sodium-ion translocating step. This is Tetrahydromethanopterin S-methyltransferase subunit A from Methanosarcina mazei (strain ATCC BAA-159 / DSM 3647 / Goe1 / Go1 / JCM 11833 / OCM 88) (Methanosarcina frisia).